Reading from the N-terminus, the 152-residue chain is Large ribosomal subunit protein uL15 (152 aa).

The segment at 18 to 37 (RVARGIGSGKGKTAGRGVKG) is disordered. Residues 23-35 (IGSGKGKTAGRGV) are compositionally biased toward gly residues.

This sequence belongs to the universal ribosomal protein uL15 family. As to quaternary structure, part of the 50S ribosomal subunit.

Binds to the 23S rRNA. In Rickettsia bellii (strain OSU 85-389), this protein is Large ribosomal subunit protein uL15.